We begin with the raw amino-acid sequence, 267 residues long: MKLRISDAPFPGAPVMVMISGLGGLGGYWLAQQNALSQAYQVVVYDQRGTGDNADTLPEGYTLTDMAQELHRALALHGVQRYAVLGHALGGLVGLELALAYPRAVSALVIINGWLSLGTWTRRCFDARERLLLDSGPAVYVAAQPLFLYPPQWAQENQPRLEAEEALQNAHFQGTENLLRRLWALKTADYRERAARVTTPVQLICARDDVLVPWTCSQALHEALPHSRLDVMTSGGHACNVTAPQRFNSLLYAGLAALTPAPHKETV.

Residues 14–115 enclose the AB hydrolase-1 domain; sequence PVMVMISGLG…SALVIINGWL (102 aa).

Belongs to the AB hydrolase superfamily. Hydrolase RutD family.

It carries out the reaction carbamate + 2 H(+) = NH4(+) + CO2. In terms of biological role, involved in pyrimidine catabolism. May facilitate the hydrolysis of carbamate, a reaction that can also occur spontaneously. The chain is Putative carbamate hydrolase RutD from Cronobacter turicensis (strain DSM 18703 / CCUG 55852 / LMG 23827 / z3032).